The following is a 128-amino-acid chain: Fatty acid binding protein 1-B.1 (128 aa).

This sequence belongs to the calycin superfamily. Fatty-acid binding protein (FABP) family. As to expression, expressed in the yolk syncytial layer (YSL) and subsequently in the intestinal bulb in developing embryos and larvae. In adults, expressed in the intestine.

Its subcellular location is the cytoplasm. Binds free fatty acids and their coenzyme A derivatives, bilirubin, and some other small molecules in the cytoplasm. May be involved in intracellular lipid transport. The chain is Fatty acid binding protein 1-B.1 (fabp1b.1) from Danio rerio (Zebrafish).